Reading from the N-terminus, the 81-residue chain is uncharacterized protein (81 aa).

This is an uncharacterized protein from Sulfolobus islandicus rod-shaped virus 1 (SIRV-1).